We begin with the raw amino-acid sequence, 125 residues long: Small ribosomal subunit protein uS11 (125 aa).

Belongs to the universal ribosomal protein uS11 family. As to quaternary structure, part of the 30S ribosomal subunit. Interacts with proteins S7 and S18. Binds to IF-3.

Located on the platform of the 30S subunit, it bridges several disparate RNA helices of the 16S rRNA. Forms part of the Shine-Dalgarno cleft in the 70S ribosome. This Aquifex aeolicus (strain VF5) protein is Small ribosomal subunit protein uS11.